The following is a 220-amino-acid chain: N-(5'-phosphoribosyl)anthranilate isomerase (220 aa).

It belongs to the TrpF family.

It carries out the reaction N-(5-phospho-beta-D-ribosyl)anthranilate = 1-(2-carboxyphenylamino)-1-deoxy-D-ribulose 5-phosphate. It functions in the pathway amino-acid biosynthesis; L-tryptophan biosynthesis; L-tryptophan from chorismate: step 3/5. The chain is N-(5'-phosphoribosyl)anthranilate isomerase from Xylella fastidiosa (strain 9a5c).